We begin with the raw amino-acid sequence, 351 residues long: UDP-3-O-acylglucosamine N-acyltransferase (351 aa).

His-240 (proton acceptor) is an active-site residue.

Belongs to the transferase hexapeptide repeat family. LpxD subfamily. In terms of assembly, homotrimer.

It catalyses the reaction a UDP-3-O-[(3R)-3-hydroxyacyl]-alpha-D-glucosamine + a (3R)-hydroxyacyl-[ACP] = a UDP-2-N,3-O-bis[(3R)-3-hydroxyacyl]-alpha-D-glucosamine + holo-[ACP] + H(+). It participates in bacterial outer membrane biogenesis; LPS lipid A biosynthesis. Its function is as follows. Catalyzes the N-acylation of UDP-3-O-acylglucosamine using 3-hydroxyacyl-ACP as the acyl donor. Is involved in the biosynthesis of lipid A, a phosphorylated glycolipid that anchors the lipopolysaccharide to the outer membrane of the cell. This Pseudomonas entomophila (strain L48) protein is UDP-3-O-acylglucosamine N-acyltransferase.